We begin with the raw amino-acid sequence, 623 residues long: Membrane protein insertase YidC (623 aa).

5 consecutive transmembrane segments (helical) span residues 8–28, 379–399, 449–469, 507–527, and 543–563; these read LILA…LFPP, MGLA…PLAY, LPIL…FVTI, TTMA…SMWL, and IFAW…SGLV. Residues 601–617 show a composition bias toward low complexity; the sequence is KPAAQPAGKAANDGAAP. Residues 601–623 are disordered; it reads KPAAQPAGKAANDGAAPAKKRKP.

Belongs to the OXA1/ALB3/YidC family. Type 1 subfamily. Interacts with the Sec translocase complex via SecD. Specifically interacts with transmembrane segments of nascent integral membrane proteins during membrane integration.

It localises to the cell inner membrane. Required for the insertion and/or proper folding and/or complex formation of integral membrane proteins into the membrane. Involved in integration of membrane proteins that insert both dependently and independently of the Sec translocase complex, as well as at least some lipoproteins. Aids folding of multispanning membrane proteins. This Cereibacter sphaeroides (strain ATCC 17023 / DSM 158 / JCM 6121 / CCUG 31486 / LMG 2827 / NBRC 12203 / NCIMB 8253 / ATH 2.4.1.) (Rhodobacter sphaeroides) protein is Membrane protein insertase YidC.